The following is a 180-amino-acid chain: NADH-quinone oxidoreductase subunit I (180 aa).

2 4Fe-4S ferredoxin-type domains span residues 50-80 (LTRDPDGEERCVACNLCAVACPVGCISLQKA) and 90-119 (EFFRVNFSRCIFCGFCEEACPTTAIQLTPD). [4Fe-4S] cluster contacts are provided by Cys-60, Cys-63, Cys-66, Cys-70, Cys-99, Cys-102, Cys-105, and Cys-109.

Belongs to the complex I 23 kDa subunit family. NDH-1 is composed of 13 different subunits. Subunits NuoA, H, J, K, L, M, N constitute the membrane sector of the complex. [4Fe-4S] cluster is required as a cofactor.

It localises to the cell inner membrane. The enzyme catalyses a quinone + NADH + 5 H(+)(in) = a quinol + NAD(+) + 4 H(+)(out). Functionally, NDH-1 shuttles electrons from NADH, via FMN and iron-sulfur (Fe-S) centers, to quinones in the respiratory chain. The immediate electron acceptor for the enzyme in this species is believed to be ubiquinone. Couples the redox reaction to proton translocation (for every two electrons transferred, four hydrogen ions are translocated across the cytoplasmic membrane), and thus conserves the redox energy in a proton gradient. In Pectobacterium atrosepticum (strain SCRI 1043 / ATCC BAA-672) (Erwinia carotovora subsp. atroseptica), this protein is NADH-quinone oxidoreductase subunit I.